The primary structure comprises 197 residues: Imidazoleglycerol-phosphate dehydratase (197 aa).

This sequence belongs to the imidazoleglycerol-phosphate dehydratase family.

Its subcellular location is the cytoplasm. The enzyme catalyses D-erythro-1-(imidazol-4-yl)glycerol 3-phosphate = 3-(imidazol-4-yl)-2-oxopropyl phosphate + H2O. Its pathway is amino-acid biosynthesis; L-histidine biosynthesis; L-histidine from 5-phospho-alpha-D-ribose 1-diphosphate: step 6/9. This Marinomonas sp. (strain MWYL1) protein is Imidazoleglycerol-phosphate dehydratase.